The sequence spans 492 residues: NADH-quinone oxidoreductase subunit N (492 aa).

Helical transmembrane passes span 16–36 (LLIP…VGVF), 44–64 (LYIT…FLEG), 81–101 (ISLL…LFFM), 111–131 (GAEF…MASS), 134–154 (LILI…LIAL), 168–188 (FIMG…LYAA), 210–230 (ILVF…VTLV), 244–264 (NALL…AVII), 276–296 (AFVE…PNLI), 306–326 (MLAY…LINT), 332–352 (VIFF…GILW), 382–402 (LAIL…FCVF), 423–443 (IMAI…IYIF), and 463–483 (FALS…QNLL).

It belongs to the complex I subunit 2 family. NDH-1 is composed of 14 different subunits. Subunits NuoA, H, J, K, L, M, N constitute the membrane sector of the complex.

It localises to the cell inner membrane. The catalysed reaction is a quinone + NADH + 5 H(+)(in) = a quinol + NAD(+) + 4 H(+)(out). In terms of biological role, NDH-1 shuttles electrons from NADH, via FMN and iron-sulfur (Fe-S) centers, to quinones in the respiratory chain. The immediate electron acceptor for the enzyme in this species is believed to be ubiquinone. Couples the redox reaction to proton translocation (for every two electrons transferred, four hydrogen ions are translocated across the cytoplasmic membrane), and thus conserves the redox energy in a proton gradient. The chain is NADH-quinone oxidoreductase subunit N from Helicobacter hepaticus (strain ATCC 51449 / 3B1).